A 380-amino-acid polypeptide reads, in one-letter code: E3 ubiquitin-protein ligase RNF13 (380 aa).

A signal peptide spans 1-34 (MLLSIGMLMLSATQVYTILTVQLFAFLNLLPVEA). At 35-182 (DILAYNFENA…VPEFSLPLEY (148 aa)) the chain is on the lumenal side. The PA domain maps to 65 to 160 (KGFLINSKPE…GESSANSLKD (96 aa)). Asn88 carries N-linked (GlcNAc...) asparagine glycosylation. A helical membrane pass occupies residues 183 to 203 (YLIPFLIIVGICLILIVIFMI). The Cytoplasmic portion of the chain corresponds to 204–380 (TKFVQDRHRA…ERDYNIANTV (177 aa)). The RING-type; atypical zinc finger occupies 240–282 (CAICLDEYEDGDKLRILPCSHAYHCKCVDPWLTKTKKTCPVCK). The disordered stretch occupies residues 285–380 (VVPSQGDSDS…ERDYNIANTV (96 aa)). Composition is skewed to acidic residues over residues 292-304 (SDSD…EENE) and 339-356 (SDYE…AENE).

Interacts with ERN1. Post-translationally, autoubiquitinated.

The protein resides in the endoplasmic reticulum membrane. It localises to the late endosome membrane. It is found in the lysosome membrane. The protein localises to the nucleus inner membrane. It carries out the reaction S-ubiquitinyl-[E2 ubiquitin-conjugating enzyme]-L-cysteine + [acceptor protein]-L-lysine = [E2 ubiquitin-conjugating enzyme]-L-cysteine + N(6)-ubiquitinyl-[acceptor protein]-L-lysine.. The protein operates within protein modification; protein ubiquitination. E3 ubiquitin-protein ligase that regulates cell proliferation. Involved in apoptosis regulation. Mediates ER stress-induced activation of JNK signaling pathway and apoptosis by promoting ERN1 activation and splicing of XBP1 mRNA. Also involved in protein trafficking and localization. This chain is E3 ubiquitin-protein ligase RNF13 (RNF13), found in Bos taurus (Bovine).